The following is a 187-amino-acid chain: Peptidyl-tRNA hydrolase (187 aa).

Residue Y14 participates in tRNA binding. H19 acts as the Proton acceptor in catalysis. Residues Y63 and N65 each contribute to the tRNA site.

It belongs to the PTH family. Monomer.

The protein resides in the cytoplasm. The enzyme catalyses an N-acyl-L-alpha-aminoacyl-tRNA + H2O = an N-acyl-L-amino acid + a tRNA + H(+). Hydrolyzes ribosome-free peptidyl-tRNAs (with 1 or more amino acids incorporated), which drop off the ribosome during protein synthesis, or as a result of ribosome stalling. Its function is as follows. Catalyzes the release of premature peptidyl moieties from peptidyl-tRNA molecules trapped in stalled 50S ribosomal subunits, and thus maintains levels of free tRNAs and 50S ribosomes. This chain is Peptidyl-tRNA hydrolase, found in Thermodesulfovibrio yellowstonii (strain ATCC 51303 / DSM 11347 / YP87).